The chain runs to 102 residues: ATP-dependent Clp protease adapter protein ClpS (102 aa).

It belongs to the ClpS family. In terms of assembly, binds to the N-terminal domain of the chaperone ClpA.

Its function is as follows. Involved in the modulation of the specificity of the ClpAP-mediated ATP-dependent protein degradation. The polypeptide is ATP-dependent Clp protease adapter protein ClpS (Shewanella piezotolerans (strain WP3 / JCM 13877)).